The sequence spans 567 residues: Probable E3 ubiquitin-protein ligase ARI8 (567 aa).

Residues Met-1–Gly-27 form a disordered region. The span at Ala-18–Gly-27 shows a compositional bias: acidic residues. The TRIAD supradomain stretch occupies residues Gly-124–Glu-337. Residues Cys-128, Cys-131, Cys-145, His-147, Cys-150, Cys-153, Cys-173, Cys-178, Cys-217, Cys-222, Cys-239, Cys-241, Cys-246, Cys-249, His-254, Cys-259, Cys-286, and Cys-289 each contribute to the Zn(2+) site. The segment at Cys-128–Cys-178 adopts an RING-type 1 zinc-finger fold. The IBR-type zinc finger occupies Gln-197–Cys-259. The RING-type 2; atypical zinc finger occupies Cys-286–Cys-316. Cys-299 is a catalytic residue. Residues Cys-304, Cys-308, Cys-313, Cys-316, His-323, and Cys-333 each coordinate Zn(2+). A disordered region spans residues Asp-514–His-543. The segment covering Ser-521 to Ser-542 has biased composition (low complexity). The RanBP2-type zinc finger occupies Asp-540–Arg-567.

This sequence belongs to the RBR family. Ariadne subfamily. Zn(2+) serves as cofactor. As to expression, ubiquitous.

It carries out the reaction [E2 ubiquitin-conjugating enzyme]-S-ubiquitinyl-L-cysteine + [acceptor protein]-L-lysine = [E2 ubiquitin-conjugating enzyme]-L-cysteine + [acceptor protein]-N(6)-ubiquitinyl-L-lysine.. It participates in protein modification; protein ubiquitination. Its function is as follows. Might act as an E3 ubiquitin-protein ligase, or as part of E3 complex, which accepts ubiquitin from specific E2 ubiquitin-conjugating enzymes and then transfers it to substrates. This chain is Probable E3 ubiquitin-protein ligase ARI8 (ARI8), found in Arabidopsis thaliana (Mouse-ear cress).